Here is an 844-residue protein sequence, read N- to C-terminus: Meiotically up-regulated gene 61 protein (844 aa).

2 disordered regions span residues 333-354 (ENNS…PQSQ) and 384-415 (NFGL…EISS). The span at 384 to 394 (NFGLEASNTST) shows a compositional bias: polar residues. The span at 395–407 (PEKKKFDSQKPDD) shows a compositional bias: basic and acidic residues. The chain crosses the membrane as a helical span at residues 459-479 (VVNSLWLVLLVVPLLGFVGFW). 605-612 (AKNLNGKS) is an ATP binding site. A helical membrane pass occupies residues 705-725 (VISCWRIYLLIGILAAITGTV).

In terms of assembly, interacts with sad1.

The protein resides in the endoplasmic reticulum membrane. Its subcellular location is the nucleus membrane. Its function is as follows. Required for correct meiotic chromosome segregation. This Schizosaccharomyces pombe (strain 972 / ATCC 24843) (Fission yeast) protein is Meiotically up-regulated gene 61 protein (mug61).